The primary structure comprises 200 residues: MSDIPLIDLKADPFALFAAWVSDAEKSEPNDPNAMAVATATPDGRPSVRMLLLKGVDERGFVFYTNLESRKGRELLANPHVALLFHWKSLRRQIRIEGPVEAVSAAEADAYFASRSRMSRLGAIASDQSRPLDDRSTFEERLKAVDEKYGDGPIPRPANWSGFRVLPEAIEFWQDRPYRLHDRAVWTRDGNGWNVTRLYP.

Residues 49–54, 64–65, Arg-70, Lys-71, and Gln-93 contribute to the FMN site; these read RMLLLK and YT. A substrate-binding site is contributed by Lys-54. The substrate site is built by Tyr-111, Arg-115, and Ser-119. FMN contacts are provided by residues 128–129 and Trp-173; that span reads QS. 179-181 is a binding site for substrate; that stretch reads RLH. Arg-183 serves as a coordination point for FMN.

Belongs to the pyridoxamine 5'-phosphate oxidase family. As to quaternary structure, homodimer. FMN is required as a cofactor.

It carries out the reaction pyridoxamine 5'-phosphate + O2 + H2O = pyridoxal 5'-phosphate + H2O2 + NH4(+). The catalysed reaction is pyridoxine 5'-phosphate + O2 = pyridoxal 5'-phosphate + H2O2. Its pathway is cofactor metabolism; pyridoxal 5'-phosphate salvage; pyridoxal 5'-phosphate from pyridoxamine 5'-phosphate: step 1/1. The protein operates within cofactor metabolism; pyridoxal 5'-phosphate salvage; pyridoxal 5'-phosphate from pyridoxine 5'-phosphate: step 1/1. In terms of biological role, catalyzes the oxidation of either pyridoxine 5'-phosphate (PNP) or pyridoxamine 5'-phosphate (PMP) into pyridoxal 5'-phosphate (PLP). This chain is Pyridoxine/pyridoxamine 5'-phosphate oxidase, found in Gluconobacter oxydans (strain 621H) (Gluconobacter suboxydans).